The following is a 177-amino-acid chain: Ribosome maturation factor RimM (177 aa).

One can recognise a PRC barrel domain in the interval Asp-96–Tyr-177.

Belongs to the RimM family. In terms of assembly, binds ribosomal protein uS19.

It localises to the cytoplasm. An accessory protein needed during the final step in the assembly of 30S ribosomal subunit, possibly for assembly of the head region. Essential for efficient processing of 16S rRNA. May be needed both before and after RbfA during the maturation of 16S rRNA. It has affinity for free ribosomal 30S subunits but not for 70S ribosomes. This chain is Ribosome maturation factor RimM, found in Herminiimonas arsenicoxydans.